Here is a 431-residue protein sequence, read N- to C-terminus: MLDIQLLRSNTAAVAERLARRGYDFDTARFDALEERRKSVQVKTEELQASRNSISKQIGALKGQGKHEEAQAAMDQVAQIKTDLEQAAADLDAVQKELDAWLLSIPNLPHESVPPGKDETENVEVRKVGTPREFDFEIKDHVDLGEPLGLDFEGGAKLSGARFTVMRGQIARLHRALAQFMLDTHTLQHGYTEHYTPYIVDDTTLQGTGQLPKFAEDLFHVTRGGDETKTTQYLIPTAEVTLTNTVAGSIIPSEQLPLKLTAHSPCFRSEAGSYGKDTRGLIRQHQFDKVEMVQIVHPEKSYGALEEMVGHAENILKALELPYRVITLCTGDMGFSAAKTYDLEVWVPAQNTYREISSCSNCEDFQARRMKARFKDENGKNRLVHTLNGSGLAVGRTLVAVLENHQNADGSINIPAALQPYMGGVTKLEVK.

237–239 (TAE) contacts L-serine. 268-270 (RSE) serves as a coordination point for ATP. E291 is a binding site for L-serine. Position 355-358 (355-358 (EISS)) interacts with ATP. Position 390 (S390) interacts with L-serine.

The protein belongs to the class-II aminoacyl-tRNA synthetase family. Type-1 seryl-tRNA synthetase subfamily. In terms of assembly, homodimer. The tRNA molecule binds across the dimer.

The protein localises to the cytoplasm. The catalysed reaction is tRNA(Ser) + L-serine + ATP = L-seryl-tRNA(Ser) + AMP + diphosphate + H(+). It carries out the reaction tRNA(Sec) + L-serine + ATP = L-seryl-tRNA(Sec) + AMP + diphosphate + H(+). The protein operates within aminoacyl-tRNA biosynthesis; selenocysteinyl-tRNA(Sec) biosynthesis; L-seryl-tRNA(Sec) from L-serine and tRNA(Sec): step 1/1. Functionally, catalyzes the attachment of serine to tRNA(Ser). Is also able to aminoacylate tRNA(Sec) with serine, to form the misacylated tRNA L-seryl-tRNA(Sec), which will be further converted into selenocysteinyl-tRNA(Sec). In Neisseria gonorrhoeae (strain NCCP11945), this protein is Serine--tRNA ligase.